Consider the following 293-residue polypeptide: Acetyl-coenzyme A carboxylase carboxyl transferase subunit beta (293 aa).

One can recognise a CoA carboxyltransferase N-terminal domain in the interval 29–293 (LWVKCSECSQ…GVNELVEANI (265 aa)). Zn(2+)-binding residues include Cys33, Cys36, Cys52, and Cys55. The C4-type zinc-finger motif lies at 33–55 (CSECSQVAYRKDLISNFNVCSNC).

The protein belongs to the AccD/PCCB family. In terms of assembly, acetyl-CoA carboxylase is a heterohexamer composed of biotin carboxyl carrier protein (AccB), biotin carboxylase (AccC) and two subunits each of ACCase subunit alpha (AccA) and ACCase subunit beta (AccD). Zn(2+) serves as cofactor.

It is found in the cytoplasm. The catalysed reaction is N(6)-carboxybiotinyl-L-lysyl-[protein] + acetyl-CoA = N(6)-biotinyl-L-lysyl-[protein] + malonyl-CoA. Its pathway is lipid metabolism; malonyl-CoA biosynthesis; malonyl-CoA from acetyl-CoA: step 1/1. In terms of biological role, component of the acetyl coenzyme A carboxylase (ACC) complex. Biotin carboxylase (BC) catalyzes the carboxylation of biotin on its carrier protein (BCCP) and then the CO(2) group is transferred by the transcarboxylase to acetyl-CoA to form malonyl-CoA. This chain is Acetyl-coenzyme A carboxylase carboxyl transferase subunit beta, found in Prochlorococcus marinus (strain MIT 9215).